The chain runs to 366 residues: Ribosomal RNA large subunit methyltransferase M (366 aa).

S-adenosyl-L-methionine contacts are provided by residues Ser-188, 221-224, Asp-240, Asp-260, and Asp-277; that span reads CPGG. Residue Lys-306 is the Proton acceptor of the active site.

The protein belongs to the class I-like SAM-binding methyltransferase superfamily. RNA methyltransferase RlmE family. RlmM subfamily. In terms of assembly, monomer.

The protein localises to the cytoplasm. The enzyme catalyses cytidine(2498) in 23S rRNA + S-adenosyl-L-methionine = 2'-O-methylcytidine(2498) in 23S rRNA + S-adenosyl-L-homocysteine + H(+). Catalyzes the 2'-O-methylation at nucleotide C2498 in 23S rRNA. This chain is Ribosomal RNA large subunit methyltransferase M, found in Salmonella paratyphi C (strain RKS4594).